The sequence spans 223 residues: Probable glutathione S-transferase (223 aa).

Positions 2 to 81 constitute a GST N-terminal domain; sequence AEVKLLGFWY…YIDETFEGPS (80 aa). Residues Ser12, Lys39, Val53, and 65–66 each bind glutathione; that span reads ES. Residues 86–212 enclose the GST C-terminal domain; it reads DPYDRALARF…ELLAFFRARF (127 aa).

This sequence belongs to the GST superfamily. HSP26 family. As to expression, root tip-specific expression.

The enzyme catalyses RX + glutathione = an S-substituted glutathione + a halide anion + H(+). This Nicotiana tabacum (Common tobacco) protein is Probable glutathione S-transferase.